An 84-amino-acid polypeptide reads, in one-letter code: Small ribosomal subunit protein bS16 (84 aa).

It belongs to the bacterial ribosomal protein bS16 family.

The sequence is that of Small ribosomal subunit protein bS16 from Burkholderia ambifaria (strain MC40-6).